Here is a 186-residue protein sequence, read N- to C-terminus: Peptidyl-tRNA hydrolase (186 aa).

Tyrosine 14 provides a ligand contact to tRNA. The active-site Proton acceptor is histidine 19. The tRNA site is built by phenylalanine 64, asparagine 66, and asparagine 112.

It belongs to the PTH family. As to quaternary structure, monomer.

The protein resides in the cytoplasm. It catalyses the reaction an N-acyl-L-alpha-aminoacyl-tRNA + H2O = an N-acyl-L-amino acid + a tRNA + H(+). Hydrolyzes ribosome-free peptidyl-tRNAs (with 1 or more amino acids incorporated), which drop off the ribosome during protein synthesis, or as a result of ribosome stalling. Functionally, catalyzes the release of premature peptidyl moieties from peptidyl-tRNA molecules trapped in stalled 50S ribosomal subunits, and thus maintains levels of free tRNAs and 50S ribosomes. This Listeria monocytogenes serovar 1/2a (strain ATCC BAA-679 / EGD-e) protein is Peptidyl-tRNA hydrolase.